The following is a 214-amino-acid chain: Putative archaetidylserine decarboxylase proenzyme (214 aa).

The active-site Schiff-base intermediate with substrate; via pyruvic acid is Ser180. Ser180 bears the Pyruvic acid (Ser); by autocatalysis mark.

Belongs to the phosphatidylserine decarboxylase family. PSD-A subfamily. As to quaternary structure, heterodimer of a large membrane-associated beta subunit and a small pyruvoyl-containing alpha subunit. Pyruvate is required as a cofactor. Is synthesized initially as an inactive proenzyme. Formation of the active enzyme involves a self-maturation process in which the active site pyruvoyl group is generated from an internal serine residue via an autocatalytic post-translational modification. Two non-identical subunits are generated from the proenzyme in this reaction, and the pyruvate is formed at the N-terminus of the alpha chain, which is derived from the carboxyl end of the proenzyme. The post-translation cleavage follows an unusual pathway, termed non-hydrolytic serinolysis, in which the side chain hydroxyl group of the serine supplies its oxygen atom to form the C-terminus of the beta chain, while the remainder of the serine residue undergoes an oxidative deamination to produce ammonia and the pyruvoyl prosthetic group on the alpha chain.

It is found in the cell membrane. It catalyses the reaction archaetidylserine + H(+) = archaetidylethanolamine + CO2. In terms of biological role, catalyzes the formation of archaetidylethanolamine (PtdEtn) from archaetidylserine (PtdSer). In Methanopyrus kandleri (strain AV19 / DSM 6324 / JCM 9639 / NBRC 100938), this protein is Putative archaetidylserine decarboxylase proenzyme.